Here is a 293-residue protein sequence, read N- to C-terminus: MYLRFANRKPYEKLHLSTALEDWDMSEELKLSITADQYFAGADDKVERYTLRRQHSTEVSPTRSEEGDYQECTFRPSLWLVVDPNLVIPCPEWINRIPPEPELTSPPLQLQRQLSNDYSTVEDSEDEAPTSCSDVLTDDDDSYNPWQPKHKRKKAKCLGKKLRVQKGLTQLESWPRPPLNYCNLISLALRNSEDGSLNVQQIYSFVREHFPFFRIAPDGWKNTVRHNLCFSSSFEKSSGWVCADGHRRSCLWKLTRQGRRKFRNEMHALSDDLLHVLRKSMKKPALMELMFGM.

Residues 104–152 (TSPPLQLQRQLSNDYSTVEDSEDEAPTSCSDVLTDDDDSYNPWQPKHKR) are disordered. Polar residues predominate over residues 106–119 (PPLQLQRQLSNDYS). Positions 176–273 (RPPLNYCNLI…NEMHALSDDL (98 aa)) form a DNA-binding region, fork-head.

It localises to the nucleus. The protein is Forkhead box protein N5 of Xenopus tropicalis (Western clawed frog).